The following is an 810-amino-acid chain: Phenylalanine--tRNA ligase beta subunit (810 aa).

Residues 39–154 form the tRNA-binding domain; it reads APPTEKIVVG…EGTPVGQDIR (116 aa). Residues 405–480 form the B5 domain; it reads PQRAPVSMRA…RIYGFEKIPA (76 aa). The Mg(2+) site is built by D458, D464, E467, and E468. An FDX-ACB domain is found at 707–809; sequence SKFPPVRRDI…MARVYGARLR (103 aa).

It belongs to the phenylalanyl-tRNA synthetase beta subunit family. Type 1 subfamily. As to quaternary structure, tetramer of two alpha and two beta subunits. It depends on Mg(2+) as a cofactor.

Its subcellular location is the cytoplasm. It carries out the reaction tRNA(Phe) + L-phenylalanine + ATP = L-phenylalanyl-tRNA(Phe) + AMP + diphosphate + H(+). This Burkholderia pseudomallei (strain 1710b) protein is Phenylalanine--tRNA ligase beta subunit.